The chain runs to 386 residues: Patatin-07 (386 aa).

An N-terminal signal peptide occupies residues 1–23 (MATTKSFLILFFMILATTSSTCA). In terms of domain architecture, PNPLA spans 32-229 (LSIDGGGIKG…TVADPALLSV (198 aa)). Positions 36-41 (GGGIKG) match the GXGXXG motif. The short motif at 75-79 (GTSTG) is the GXSXG element. S77 acts as the Nucleophile in catalysis. N-linked (GlcNAc...) asparagine glycosylation is found at N115 and N202. Residue D215 is the Proton acceptor of the active site. Positions 215 to 217 (DGA) match the DGA/G motif.

The protein belongs to the patatin family. In terms of tissue distribution, tuber.

The protein resides in the vacuole. Probable lipolytic acyl hydrolase (LAH), an activity which is thought to be involved in the response of tubers to pathogens. This is Patatin-07 from Solanum tuberosum (Potato).